Here is a 109-residue protein sequence, read N- to C-terminus: uncharacterized protein (109 aa).

The protein localises to the mitochondrion. This is an uncharacterized protein from Saccharomyces cerevisiae (strain ATCC 204508 / S288c) (Baker's yeast).